Here is a 177-residue protein sequence, read N- to C-terminus: Large ribosomal subunit protein uL5 (177 aa).

It belongs to the universal ribosomal protein uL5 family. Part of the 50S ribosomal subunit. Interacts with protein L18 and the 5S rRNA, and probably with tRNAs. Forms a bridge to the 30S subunit in the 70S ribosome.

Its function is as follows. This is 1 of 5 proteins that mediates the attachment of the 5S rRNA onto the large ribosomal subunit, stabilizing the orientation of adjacent RNA domains. Forms part of the central protuberance. Modeling places the A and P site tRNAs in close proximity to this protein; the 5S rRNA and some of its associated proteins might help stabilize positioning of ribosome-bound tRNAs. In the 70S ribosome it is thought to contact protein S13 of the 30S subunit (bridge B1b), connecting the 2 subunits; this bridge is implicated in subunit movement. The polypeptide is Large ribosomal subunit protein uL5 (rpl5) (Haloarcula marismortui (strain ATCC 43049 / DSM 3752 / JCM 8966 / VKM B-1809) (Halobacterium marismortui)).